Here is a 229-residue protein sequence, read N- to C-terminus: CMRF35-like molecule 6 (229 aa).

The first 21 residues, 1–21 (MNPRVIRLWLPSAVLLSLVPG), serve as a signal peptide directing secretion. The 105-residue stretch at 22 to 126 (HFPVRGPSTV…FYDAYLQIDK (105 aa)) folds into the Ig-like V-type domain. Residues 22–188 (HFPVRGPSTV…ELRSLLSSPH (167 aa)) are Extracellular-facing. A disulfide bridge connects residues cysteine 43 and cysteine 110. N-linked (GlcNAc...) asparagine glycosylation is found at asparagine 90 and asparagine 99. A helical membrane pass occupies residues 189–209 (FWILVSLKLPLFLSMLGALLW). The Cytoplasmic segment spans residues 210 to 229 (VNRPQRCSGGSSAWPCYENQ).

Belongs to the CD300 family.

It localises to the cell membrane. The protein is CMRF35-like molecule 6 (Cd300c) of Mus musculus (Mouse).